The sequence spans 96 residues: MSGPNGDPNISVDDGIIEDEDEFSEEEYAAIDSMLDQINSCLDDIEDRNDALNGKLHELLESNRQARKDFRQQLNDEEASPPPAEDPASRDTQTED.

Positions 39–79 (NSCLDDIEDRNDALNGKLHELLESNRQARKDFRQQLNDEEA) form a coiled coil. Residues 63 to 96 (NRQARKDFRQQLNDEEASPPPAEDPASRDTQTED) form a disordered region. A compositionally biased stretch (basic and acidic residues) spans 87–96 (PASRDTQTED).

The protein belongs to the UPF0184 (EST00098) family.

It is found in the cell junction. It localises to the cytoplasm. The protein resides in the cytoskeleton. In terms of biological role, essential for intermediate filament organization in intestinal cells, interacts with intermediate filament and regulates intestinal lumen morphology. The sequence is that of Bublin coiled-coil protein (bbln) from Ctenopharyngodon idella (Grass carp).